Consider the following 139-residue polypeptide: Probable disulfide formation protein C 1 (139 aa).

The helical transmembrane segment at 8 to 27 (EYALFTAWGASFIATLGSLY) threads the bilayer. Cys37 and Cys40 are oxidised to a cystine. 2 helical membrane passes run 42 to 61 (YQRIFMYPFVLWLGIAVVKK) and 68 to 85 (YSLPIASIGACISLYHYA). Cysteines 99 and 104 form a disulfide. The chain crosses the membrane as a helical span at residues 113–135 (GFVTIPFLALIGFITIAVCSFIV).

Belongs to the DsbB family. BdbC subfamily.

Its subcellular location is the cell membrane. Required for disulfide bond formation in some proteins. This Bacillus cereus (strain ATCC 10987 / NRS 248) protein is Probable disulfide formation protein C 1 (bdbC1).